The sequence spans 178 residues: ATP-dependent protease subunit HslV (178 aa).

Residue T7 is part of the active site. Residues G162, C165, and T168 each contribute to the Na(+) site.

It belongs to the peptidase T1B family. HslV subfamily. In terms of assembly, a double ring-shaped homohexamer of HslV is capped on each side by a ring-shaped HslU homohexamer. The assembly of the HslU/HslV complex is dependent on binding of ATP.

The protein resides in the cytoplasm. The catalysed reaction is ATP-dependent cleavage of peptide bonds with broad specificity.. Allosterically activated by HslU binding. Its function is as follows. Protease subunit of a proteasome-like degradation complex believed to be a general protein degrading machinery. This chain is ATP-dependent protease subunit HslV, found in Herminiimonas arsenicoxydans.